The sequence spans 287 residues: 4-diphosphocytidyl-2-C-methyl-D-erythritol kinase (287 aa).

Lys22 is a catalytic residue. Pro102–Ser112 provides a ligand contact to ATP. The active site involves Asp139.

Belongs to the GHMP kinase family. IspE subfamily.

The catalysed reaction is 4-CDP-2-C-methyl-D-erythritol + ATP = 4-CDP-2-C-methyl-D-erythritol 2-phosphate + ADP + H(+). It functions in the pathway isoprenoid biosynthesis; isopentenyl diphosphate biosynthesis via DXP pathway; isopentenyl diphosphate from 1-deoxy-D-xylulose 5-phosphate: step 3/6. Functionally, catalyzes the phosphorylation of the position 2 hydroxy group of 4-diphosphocytidyl-2C-methyl-D-erythritol. The chain is 4-diphosphocytidyl-2-C-methyl-D-erythritol kinase from Dinoroseobacter shibae (strain DSM 16493 / NCIMB 14021 / DFL 12).